A 315-amino-acid polypeptide reads, in one-letter code: 1-aminocyclopropane-1-carboxylate oxidase 1 (315 aa).

The Fe2OG dioxygenase domain maps to 153-253 (PNFGTKVSNY…RMSLASFYNP (101 aa)). The Fe cation site is built by His177, Asp179, and His234.

This sequence belongs to the iron/ascorbate-dependent oxidoreductase family. Requires Fe cation as cofactor. As to expression, predominantly expressed in the petals and the stigma and style.

The enzyme catalyses 1-aminocyclopropane-1-carboxylate + L-ascorbate + O2 = ethene + L-dehydroascorbate + hydrogen cyanide + CO2 + 2 H2O. It participates in alkene biosynthesis; ethylene biosynthesis via S-adenosyl-L-methionine; ethylene from S-adenosyl-L-methionine: step 2/2. This chain is 1-aminocyclopropane-1-carboxylate oxidase 1 (ACO1), found in Solanum lycopersicum (Tomato).